A 311-amino-acid polypeptide reads, in one-letter code: Burkholderia TALE-like protein 3 (311 aa).

One copy of the Cryptic repeat -1 repeat lies at 19-50 (LSPFECLKIEKHSGGADALEFISNKYDALTQV). One copy of the Cryptic repeat 0 repeat lies at 51–83 (LSRADILKIACHDCAAHALQAVLDYEQVFRQRG). 6 Core repeat repeats span residues 84 to 116 (FARADIIKITGNGGGAQALKAVVVHGPTLNECG), 117 to 149 (FSQADIVRIADNIGGAQALKAVLEHGPTLNERD), 150 to 182 (YSGADIVKIAGNGGGARALKAVVMHGPTLCESG), 183 to 215 (YSGADIVKIASNGGGAQALEAVAMHGSTLCERG), 216 to 248 (YCRTDIAKIAGNGGGAQALKAIVMHGPTLCERG), and 249 to 281 (YSRTDIVKIADNNGGAQALKAVFEHGPALTQAG). One copy of the Cryptic repeat +1 repeat lies at 282–311 (RSNEDIVNMAARTGAAGQIRKMAAQLSGRQ).

Belongs to the transcription activator-like effector (TALE) family. Bat subfamily.

Does not bind DNA, probably because it has too few core repeats. The protein is Burkholderia TALE-like protein 3 of Mycetohabitans rhizoxinica (strain DSM 19002 / CIP 109453 / HKI 454) (Paraburkholderia rhizoxinica).